Consider the following 87-residue polypeptide: MSDAHGVARDQLRAFIERIERLEEEKKTIADDIKDVYGEAKGMGFDTKILKKVVALRKKDEQERMEEEAILDTYLHALGMIESPPEG.

Belongs to the UPF0335 family.

This chain is UPF0335 protein RHECIAT_CH0003797, found in Rhizobium etli (strain CIAT 652).